The sequence spans 280 residues: F420-dependent methylenetetrahydromethanopterin dehydrogenase (280 aa).

This sequence belongs to the MTD family.

It carries out the reaction 5,10-methylenetetrahydromethanopterin + oxidized coenzyme F420-(gamma-L-Glu)(n) + 2 H(+) = 5,10-methenyl-5,6,7,8-tetrahydromethanopterin + reduced coenzyme F420-(gamma-L-Glu)(n). The protein operates within one-carbon metabolism; methanogenesis from CO(2); 5,10-methylene-5,6,7,8-tetrahydromethanopterin from 5,10-methenyl-5,6,7,8-tetrahydromethanopterin (coenzyme F420 route): step 1/1. In terms of biological role, catalyzes the reversible reduction of methenyl-H(4)MPT(+) to methylene-H(4)MPT. This Methanocorpusculum labreanum (strain ATCC 43576 / DSM 4855 / Z) protein is F420-dependent methylenetetrahydromethanopterin dehydrogenase.